An 86-amino-acid chain; its full sequence is Small ribosomal subunit protein bS16 (86 aa).

The protein belongs to the bacterial ribosomal protein bS16 family.

The sequence is that of Small ribosomal subunit protein bS16 from Methylibium petroleiphilum (strain ATCC BAA-1232 / LMG 22953 / PM1).